Consider the following 315-residue polypeptide: Homeobox-leucine zipper protein HAT3 (315 aa).

The tract at residues Ser-140–Lys-163 is disordered. Positions Ser-159 to Gln-218 form a DNA-binding region, homeobox. A leucine-zipper region spans residues Leu-226–Leu-247. Residues Ser-280–Pro-305 show a composition bias toward low complexity. The segment at Ser-280–His-315 is disordered.

The protein belongs to the HD-ZIP homeobox family. Class II subfamily.

It is found in the nucleus. In terms of biological role, probable transcription factor. The chain is Homeobox-leucine zipper protein HAT3 (HAT3) from Arabidopsis thaliana (Mouse-ear cress).